The chain runs to 156 residues: 6,7-dimethyl-8-ribityllumazine synthase (156 aa).

Residues phenylalanine 22, alanine 57 to glutamate 59, and threonine 81 to isoleucine 83 each bind 5-amino-6-(D-ribitylamino)uracil. Glycine 86 to threonine 87 contacts (2S)-2-hydroxy-3-oxobutyl phosphate. Histidine 89 serves as the catalytic Proton donor. Residue phenylalanine 114 participates in 5-amino-6-(D-ribitylamino)uracil binding. Residue arginine 128 participates in (2S)-2-hydroxy-3-oxobutyl phosphate binding.

Belongs to the DMRL synthase family. As to quaternary structure, forms an icosahedral capsid composed of 60 subunits, arranged as a dodecamer of pentamers.

The enzyme catalyses (2S)-2-hydroxy-3-oxobutyl phosphate + 5-amino-6-(D-ribitylamino)uracil = 6,7-dimethyl-8-(1-D-ribityl)lumazine + phosphate + 2 H2O + H(+). The protein operates within cofactor biosynthesis; riboflavin biosynthesis; riboflavin from 2-hydroxy-3-oxobutyl phosphate and 5-amino-6-(D-ribitylamino)uracil: step 1/2. In terms of biological role, catalyzes the formation of 6,7-dimethyl-8-ribityllumazine by condensation of 5-amino-6-(D-ribitylamino)uracil with 3,4-dihydroxy-2-butanone 4-phosphate. This is the penultimate step in the biosynthesis of riboflavin. The chain is 6,7-dimethyl-8-ribityllumazine synthase from Mannheimia succiniciproducens (strain KCTC 0769BP / MBEL55E).